Reading from the N-terminus, the 493-residue chain is Probable cytochrome P450 CYP36A1 (493 aa).

3 consecutive transmembrane segments (helical) span residues 1 to 21, 60 to 80, and 290 to 310; these read MLFAQLVILVIIVMLFLCRFA, GGIFTLWLPFPTIVICDYDML, and QLIVAIYDLYSAGMETIIIVL. C440 provides a ligand contact to heme.

This sequence belongs to the cytochrome P450 family. It depends on heme as a cofactor.

It localises to the membrane. Functionally, cytochromes P450 are a group of heme-thiolate monooxygenases. They oxidize a variety of structurally unrelated compounds, including steroids, fatty acids, and xenobiotics. The sequence is that of Probable cytochrome P450 CYP36A1 (cyp-36A1) from Caenorhabditis elegans.